Here is a 359-residue protein sequence, read N- to C-terminus: Protein mab-21-like 2 (359 aa).

This sequence belongs to the mab-21 family. Expressed in the adult cerebellum and eye, with lower levels in the adult forebrain. In embryos at 10.5 days post-coitum strongly expressed in the rostral and distal regions of the developing neural retina, with no expression immediately adjacent to the closing optic fissure. Expression is also observed in the dorsal and ventral aspects of the developing forelimb bud and in the developing pharyngeal arches, as well as in the midbrain.

Its subcellular location is the nucleus. The protein resides in the cytoplasm. Functionally, required for several aspects of embryonic development including normal development of the eye, notochord, neural tube and other organ tissues, and for embryonic turning. The protein is Protein mab-21-like 2 (Mab21l2) of Mus musculus (Mouse).